An 81-amino-acid chain; its full sequence is RNA-binding protein KhpA (81 aa).

The 48-residue stretch at 34-81 (KIALRLSVHKSDTGKVIGKQGRTAKAIRTAVFAAGVQSSKKVQFEIFD) folds into the KH domain.

It belongs to the KhpA RNA-binding protein family. As to quaternary structure, forms a complex with KhpB.

The protein resides in the cytoplasm. In terms of biological role, a probable RNA chaperone. Forms a complex with KhpB which binds to cellular RNA and controls its expression. Plays a role in peptidoglycan (PG) homeostasis and cell length regulation. This chain is RNA-binding protein KhpA, found in Bacillus subtilis (strain 168).